A 279-amino-acid polypeptide reads, in one-letter code: Cyanocobalamin reductase / alkylcobalamin dealkylase (279 aa).

Residues aspartate 104, 115-118, 129-131, cysteine 149, and isoleucine 160 each bind substrate; these read ILAQ and YYQ. A disordered region spans residues 239–279; it reads PSEHPSTTSELPLSLLTKPQNSRRARSWLSPSVSPPVSPGP. Low complexity predominate over residues 243–257; that stretch reads PSTTSELPLSLLTKP. 3 positions are modified to phosphoserine: serine 247, serine 272, and serine 276.

This sequence belongs to the MMACHC family. As to quaternary structure, monomer in the absence of bound substrate. Homodimer; dimerization is triggered by binding to FMN or adenosylcobalamin. Interacts with LMBRD1 and ABCD4; the interaction ensures the transport of cobalamin from the lysosome to the cytoplasm. Forms a multiprotein complex with MMADHC, MTR and MTRR; the interaction with MTR could modulate MMACHC-dependent processing of cobalamin. Heterodimer with MMADHC; the interaction might play a role in the regulation of the balance between AdoCbl and MeCbl synthesis. It depends on FAD as a cofactor. The cofactor is FMN. Detected in liver and kidney (at protein level). Detected in embryos.

It localises to the cytoplasm. Its subcellular location is the cytosol. The enzyme catalyses 2 cob(II)alamin-[cyanocobalamin reductase] + 2 hydrogen cyanide + NADP(+) = 2 cyanocob(III)alamin + 2 apo-[cyanocobalamin reductase] + NADPH + H(+). It carries out the reaction apo-[alkylcobalamin reductase] + an R-cob(III)alamin + glutathione = cob(I)alamin-[alkylcobalamin reductase] + an S-substituted glutathione + H(+). It catalyses the reaction apo-[alkylcobalamin reductase] + methylcob(III)alamin + glutathione = S-methyl glutathione + cob(I)alamin-[alkylcobalamin reductase] + H(+). The catalysed reaction is apo-[alkylcobalamin reductase] + adenosylcob(III)alamin + glutathione = S-adenosylglutathione + cob(I)alamin-[alkylcobalamin reductase] + H(+). Functionally, cobalamin (vitamin B12) cytosolic chaperone that catalyzes the reductive decyanation of cyanocob(III)alamin (cyanocobalamin, CNCbl) to yield cob(II)alamin and cyanide, using FAD or FMN as cofactors and NADPH as cosubstrate. Cyanocobalamin constitutes the inactive form of vitamin B12 introduced from the diet, and is converted into the active cofactors methylcobalamin (MeCbl) involved in methionine biosynthesis, and 5'-deoxyadenosylcobalamin (AdoCbl) involved in the TCA cycle. Forms a complex with the lysosomal transporter ABCD4 and its chaperone LMBRD1, to transport cobalamin across the lysosomal membrane into the cytosol. The processing of cobalamin in the cytosol occurs in a multiprotein complex composed of at least MMACHC, MMADHC, MTRR (methionine synthase reductase) and MTR (methionine synthase) which may contribute to shuttle safely and efficiently cobalamin towards MTR in order to produce methionine. Also acts as a glutathione transferase by catalyzing the dealkylation of the alkylcob(III)alamins MeCbl and AdoCbl, using the thiolate of glutathione for nucleophilic displacement to generate cob(I)alamin and the corresponding glutathione thioether. The conversion of incoming MeCbl or AdoCbl into a common intermediate cob(I)alamin is necessary to meet the cellular needs for both cofactors. Cysteine and homocysteine cannot substitute for glutathione in this reaction. The chain is Cyanocobalamin reductase / alkylcobalamin dealkylase from Mus musculus (Mouse).